Reading from the N-terminus, the 314-residue chain is DNA-directed RNA polymerase subunit alpha (314 aa).

The tract at residues 1-227 (MTTFEIECIE…ELLFPLKEIN (227 aa)) is alpha N-terminal domain (alpha-NTD). An alpha C-terminal domain (alpha-CTD) region spans residues 237–314 (IEDSKINQIL…LPKEKTSKSN (78 aa)).

This sequence belongs to the RNA polymerase alpha chain family. As to quaternary structure, in plastids the minimal PEP RNA polymerase catalytic core is composed of four subunits: alpha, beta, beta', and beta''. When a (nuclear-encoded) sigma factor is associated with the core the holoenzyme is formed, which can initiate transcription.

It is found in the plastid. Its subcellular location is the chloroplast. It catalyses the reaction RNA(n) + a ribonucleoside 5'-triphosphate = RNA(n+1) + diphosphate. In terms of biological role, DNA-dependent RNA polymerase catalyzes the transcription of DNA into RNA using the four ribonucleoside triphosphates as substrates. This chain is DNA-directed RNA polymerase subunit alpha, found in Pyrenomonas salina.